The following is a 342-amino-acid chain: Phosphate acyltransferase (342 aa).

The protein belongs to the PlsX family. In terms of assembly, homodimer. Probably interacts with PlsY.

The protein resides in the cytoplasm. It catalyses the reaction a fatty acyl-[ACP] + phosphate = an acyl phosphate + holo-[ACP]. The protein operates within lipid metabolism; phospholipid metabolism. In terms of biological role, catalyzes the reversible formation of acyl-phosphate (acyl-PO(4)) from acyl-[acyl-carrier-protein] (acyl-ACP). This enzyme utilizes acyl-ACP as fatty acyl donor, but not acyl-CoA. The polypeptide is Phosphate acyltransferase (Shewanella sp. (strain MR-4)).